Here is a 100-residue protein sequence, read N- to C-terminus: Large ribosomal subunit protein uL23 (100 aa).

Belongs to the universal ribosomal protein uL23 family. In terms of assembly, part of the 50S ribosomal subunit. Contacts protein L29, and trigger factor when it is bound to the ribosome.

Functionally, one of the early assembly proteins it binds 23S rRNA. One of the proteins that surrounds the polypeptide exit tunnel on the outside of the ribosome. Forms the main docking site for trigger factor binding to the ribosome. The sequence is that of Large ribosomal subunit protein uL23 from Prochlorococcus marinus (strain AS9601).